A 91-amino-acid chain; its full sequence is Ixochymostatin (91 aa).

Residues 1–20 (MKTYVLQALLLTLAVAVVRA) form the signal peptide. 5 disulfide bridges follow: cysteine 34-cysteine 70, cysteine 43-cysteine 66, cysteine 48-cysteine 62, cysteine 53-cysteine 90, and cysteine 72-cysteine 84. One can recognise a TIL domain in the interval 34 to 90 (CAEGETWKECVGSSCAELTCEHPEPSLGCTYDCNYGCYCAPDFFRNANKECVKKDKC).

This sequence belongs to the serine protease inhibitor-like (TIL domain-containing) family. As to expression, salivary gland. Midgut.

It localises to the secreted. In terms of biological role, tight-binding competitive inhibitor of chymotrypsin-like proteases; inhibits host chymase, cathepsin G (CTSG) and chymotrypsin. Inhibits chymase-mediated generation of vasoconstrictor peptides: angiotensin II and endothelin I. Reduces chymase-mediated vascular permeability and vascular endothelial-cadherin degradation. The protein is Ixochymostatin of Ixodes scapularis (Black-legged tick).